The sequence spans 517 residues: Protein NETWORKED 4B (517 aa).

Disordered stretches follow at residues 1–29 and 101–159; these read MASS…DSHN and LQKN…EDGD. Basic residues predominate over residues 10-21; sequence KQFKRSMTKKSH. The 81-residue stretch at 21–101 folds into the NAB domain; that stretch reads HSWWWDSHNC…ERYDQASGEL (81 aa). A compositionally biased stretch (low complexity) spans 107 to 119; that stretch reads SEIQSQSSLEISS. Over residues 121-135 the composition is skewed to basic and acidic residues; it reads TKEKLSRRQSSHKEE. Residues 156–486 adopt a coiled-coil conformation; sequence EDGDEALIRR…EQKREAIRQL (331 aa).

The protein belongs to the NET family.

In terms of biological role, plant-specific actin binding protein. May be part of a membrane-cytoskeletal adapter complex. The polypeptide is Protein NETWORKED 4B (Arabidopsis thaliana (Mouse-ear cress)).